The primary structure comprises 364 residues: Peptidoglycan transport system permease protein YejB (364 aa).

The next 6 membrane-spanning stretches (helical) occupy residues 9–29 (LALM…VIQF), 134–154 (SASL…PLGI), 171–191 (IIII…IVLF), 219–239 (IIDY…SAFA), 283–303 (IVIA…SLLI), and 325–345 (YPIV…VGLL). Positions 131-350 (LPVSASLGFW…VVGLLSDLIY (220 aa)) constitute an ABC transmembrane type-1 domain.

The protein belongs to the binding-protein-dependent transport system permease family. As to quaternary structure, the complex is composed of one ATP-binding protein (YejF), two transmembrane proteins (YejB and YejE) and a solute-binding protein (YepA or YejA).

The protein localises to the cell inner membrane. Functionally, part of the ABC transporter complex YejBEF-YepA involved in the uptake of muropeptides, the breakdown products of cell wall peptidoglycan. The import of muropeptides into the cell enables peptidoglycan recycling, which is vital for cell wall integrity in this bacterium. Is also probably part of the ABC transporter complex YejABEF, which is likely involved in broad-spectrum peptide import. Responsible for the translocation of the substrate across the membrane. The sequence is that of Peptidoglycan transport system permease protein YejB from Agrobacterium fabrum (strain C58 / ATCC 33970) (Agrobacterium tumefaciens (strain C58)).